The primary structure comprises 30 residues: Nattererin-1 (30 aa).

As to expression, expressed by the skin glands.

The protein resides in the secreted. Probably has antibacterial activity. This chain is Nattererin-1, found in Physalaemus nattereri (Cuyaba dwarf frog).